The primary structure comprises 161 residues: Transcription elongation factor GreA (161 aa).

Belongs to the GreA/GreB family.

Necessary for efficient RNA polymerase transcription elongation past template-encoded arresting sites. The arresting sites in DNA have the property of trapping a certain fraction of elongating RNA polymerases that pass through, resulting in locked ternary complexes. Cleavage of the nascent transcript by cleavage factors such as GreA or GreB allows the resumption of elongation from the new 3'terminus. GreA releases sequences of 2 to 3 nucleotides. The polypeptide is Transcription elongation factor GreA (Desulfotalea psychrophila (strain LSv54 / DSM 12343)).